The primary structure comprises 461 residues: Phytase A (461 aa).

An intrachain disulfide couples C22 to C31. 6 residues coordinate 1D-myo-inositol hexakisphosphate: Q41, Y42, R71, H72, R75, and T78. Cystine bridges form between C61-C405, C205-C456, C254-C272, and C427-C435. H72 (nucleophile) is an active-site residue. 2 N-linked (GlcNAc...) asparagine glycosylation sites follow: N95 and N110. R155 provides a ligand contact to 1D-myo-inositol hexakisphosphate. A glycan (N-linked (GlcNAc...) asparagine) is linked at N197. Residue K291 participates in 1D-myo-inositol hexakisphosphate binding. N-linked (GlcNAc...) asparagine glycans are attached at residues N329 and N343. 1D-myo-inositol hexakisphosphate is bound by residues H352 and D353. An N-linked (GlcNAc...) asparagine glycan is attached at N367.

Belongs to the histidine acid phosphatase family. In terms of assembly, monomer. Post-translationally, glycosylated.

Its subcellular location is the secreted. It carries out the reaction 1D-myo-inositol hexakisphosphate + H2O = 1D-myo-inositol 1,2,4,5,6-pentakisphosphate + phosphate. The enzyme catalyses 1D-myo-inositol 1,2,4,5,6-pentakisphosphate + H2O = 1D-myo-inositol 1,2,5,6-tetrakisphosphate + phosphate. It catalyses the reaction 1D-myo-inositol 1,2,5,6-tetrakisphosphate + H2O = 1D-myo-inositol 1,2,6-trisphosphate + phosphate. The catalysed reaction is 1D-myo-inositol 1,2,6-trisphosphate + H2O = 1D-myo-inositol 1,2-bisphosphate + phosphate. It carries out the reaction 1D-myo-inositol 1,2-bisphosphate + H2O = 1D-myo-inositol 2-phosphate + phosphate. Catalyzes the phosphate monoester hydrolysis of phytic acid (myo-inositol hexakisphosphate), which results in the stepwise formation of myo-inositol pentakis-, tetrakis-, tris-, bis-, and monophosphates, as well as the liberation of inorganic phosphate. Myo-inositol 2-monophosphate is the end product. This Penicillium oxalicum protein is Phytase A.